A 177-amino-acid chain; its full sequence is Dual-action ribosomal maturation protein DarP (177 aa).

Residues 1 to 26 form a disordered region; that stretch reads MKIVGDSEHFKQPYDSDEEYVSKTED.

The protein belongs to the DarP family.

It is found in the cytoplasm. Its function is as follows. Member of a network of 50S ribosomal subunit biogenesis factors which assembles along the 30S-50S interface, preventing incorrect 23S rRNA structures from forming. Promotes peptidyl transferase center (PTC) maturation. The polypeptide is Dual-action ribosomal maturation protein DarP (Shewanella sp. (strain MR-4)).